Reading from the N-terminus, the 758-residue chain is 5-methyltetrahydropteroyltriglutamate--homocysteine methyltransferase (758 aa).

5-methyltetrahydropteroyltri-L-glutamate is bound by residues Arg-16–Lys-19 and Lys-112. L-homocysteine is bound by residues Ile-433–Ser-435 and Glu-486. L-methionine contacts are provided by residues Ile-433 to Ser-435 and Glu-486. Residues Arg-517–Cys-518 and Trp-563 each bind 5-methyltetrahydropteroyltri-L-glutamate. Asp-601 serves as a coordination point for L-homocysteine. Asp-601 provides a ligand contact to L-methionine. Glu-607 lines the 5-methyltetrahydropteroyltri-L-glutamate pocket. 3 residues coordinate Zn(2+): His-643, Cys-645, and Glu-667. His-696 acts as the Proton donor in catalysis. Cys-728 contributes to the Zn(2+) binding site.

The protein belongs to the vitamin-B12 independent methionine synthase family. It depends on Zn(2+) as a cofactor.

It catalyses the reaction 5-methyltetrahydropteroyltri-L-glutamate + L-homocysteine = tetrahydropteroyltri-L-glutamate + L-methionine. It participates in amino-acid biosynthesis; L-methionine biosynthesis via de novo pathway; L-methionine from L-homocysteine (MetE route): step 1/1. Functionally, catalyzes the transfer of a methyl group from 5-methyltetrahydrofolate to homocysteine resulting in methionine formation. The protein is 5-methyltetrahydropteroyltriglutamate--homocysteine methyltransferase of Neisseria gonorrhoeae (strain ATCC 700825 / FA 1090).